The chain runs to 99 residues: MDFQKLAQELKKMQNTLSKKQKEFEEKVFDFDYKGYVLIKIKGNLTIESIEVKTEIVDPEDKETLQDILRAAVNEAISKTCKERDAIMNSTIPKGTGFF.

This sequence belongs to the YbaB/EbfC family. As to quaternary structure, homodimer.

The protein resides in the cytoplasm. It is found in the nucleoid. Binds to DNA and alters its conformation. May be involved in regulation of gene expression, nucleoid organization and DNA protection. The chain is Nucleoid-associated protein UUR10_0100 from Ureaplasma urealyticum serovar 10 (strain ATCC 33699 / Western).